We begin with the raw amino-acid sequence, 379 residues long: Phospho-N-acetylmuramoyl-pentapeptide-transferase (379 aa).

10 consecutive transmembrane segments (helical) span residues 27 to 47, 76 to 96, 100 to 120, 135 to 155, 185 to 205, 218 to 238, 255 to 275, 283 to 303, 307 to 327, and 356 to 376; these read FRTAFASLTALFMGLIIGPAV, TMGGVLITIAIIVPTLLWADL, FVWIAMLATIAFGAIGFTDDY, AKMGLQILVAILVAISLVLVQ, PHIWIIAYIPFLAFVAIVLVG, GLAIGCTVIAAGALTVLTYVS, VGELSIFCGAMVGSAIGFLWY, FMGDVGSLALGGAIGTVAVII, LLLPFIGGVFVLEALSVILQV, and KIIVRFWIASLVFALFALTTL.

The protein belongs to the glycosyltransferase 4 family. MraY subfamily. The cofactor is Mg(2+).

Its subcellular location is the cell inner membrane. It catalyses the reaction UDP-N-acetyl-alpha-D-muramoyl-L-alanyl-gamma-D-glutamyl-meso-2,6-diaminopimeloyl-D-alanyl-D-alanine + di-trans,octa-cis-undecaprenyl phosphate = di-trans,octa-cis-undecaprenyl diphospho-N-acetyl-alpha-D-muramoyl-L-alanyl-D-glutamyl-meso-2,6-diaminopimeloyl-D-alanyl-D-alanine + UMP. It functions in the pathway cell wall biogenesis; peptidoglycan biosynthesis. Its function is as follows. Catalyzes the initial step of the lipid cycle reactions in the biosynthesis of the cell wall peptidoglycan: transfers peptidoglycan precursor phospho-MurNAc-pentapeptide from UDP-MurNAc-pentapeptide onto the lipid carrier undecaprenyl phosphate, yielding undecaprenyl-pyrophosphoryl-MurNAc-pentapeptide, known as lipid I. The sequence is that of Phospho-N-acetylmuramoyl-pentapeptide-transferase from Koribacter versatilis (strain Ellin345).